The following is a 730-amino-acid chain: Cyclin-dependent kinase 12 (730 aa).

Disordered stretches follow at residues 1-230 (MEIS…APFS) and 246-283 (FSLS…IATR). The span at 9-21 (THERDRKGSYGHR) shows a compositional bias: basic and acidic residues. The segment covering 57–67 (SISPQYKQRNW) has biased composition (polar residues). A compositionally biased stretch (basic and acidic residues) spans 75 to 94 (GRDRGRNDFSYRKKGKDYNK). 2 stretches are compositionally biased toward basic residues: residues 95–122 (RRDK…KRRN) and 151–163 (KSKK…RKHS). Positions 194 to 203 (FNINPFQPMF) are enriched in low complexity. Residues 204-230 (SQPPPPPLPPNSQFMTPPPRPPPAPFS) show a composition bias toward pro residues. A Protein kinase domain is found at 313 to 605 (MLDQIGEGTY…AKEALNHPWI (293 aa)). ATP is bound by residues 317-325 (IGEGTYGQV), Lys-340, and 398-403 (EYVDHD). Asp-444 functions as the Proton acceptor in the catalytic mechanism. The segment at 623–730 (DCHEMWSKKQ…QSQYQSVFFK (108 aa)) is disordered. Position 625 (His-625) interacts with ATP. Basic residues predominate over residues 676 to 688 (NHHHHHHHSHHHA). Residues 714-730 (NNHQPVPQSQYQSVFFK) show a composition bias toward polar residues.

Belongs to the protein kinase superfamily. CMGC Ser/Thr protein kinase family. CDC2/CDKX subfamily.

The protein resides in the nucleus. The enzyme catalyses [DNA-directed RNA polymerase] + ATP = phospho-[DNA-directed RNA polymerase] + ADP + H(+). The catalysed reaction is L-seryl-[protein] + ATP = O-phospho-L-seryl-[protein] + ADP + H(+). It carries out the reaction L-threonyl-[protein] + ATP = O-phospho-L-threonyl-[protein] + ADP + H(+). In terms of biological role, cyclin-dependent kinase which displays CTD kinase activity: hyperphosphorylates 'Ser-2' in the C-terminal heptapeptide repeat domain (CTD) of the largest RNA polymerase II subunit, thereby acting as a key regulator of transcription elongation. Required for normal reproduction. The protein is Cyclin-dependent kinase 12 of Caenorhabditis elegans.